A 466-amino-acid polypeptide reads, in one-letter code: Adenylosuccinate lyase (466 aa).

Substrate is bound by residues 21 to 22 (RY), 97 to 99 (NHD), and 130 to 131 (TS). Catalysis depends on histidine 180, which acts as the Proton donor/acceptor. Residue glutamine 259 participates in substrate binding. Serine 307 functions as the Proton donor/acceptor in the catalytic mechanism. Substrate-binding residues include arginine 347, serine 352, and arginine 356.

The protein belongs to the lyase 1 family. Adenylosuccinate lyase subfamily. Homotetramer. Residues from neighboring subunits contribute catalytic and substrate-binding residues to each active site.

It carries out the reaction N(6)-(1,2-dicarboxyethyl)-AMP = fumarate + AMP. The enzyme catalyses (2S)-2-[5-amino-1-(5-phospho-beta-D-ribosyl)imidazole-4-carboxamido]succinate = 5-amino-1-(5-phospho-beta-D-ribosyl)imidazole-4-carboxamide + fumarate. It participates in purine metabolism; AMP biosynthesis via de novo pathway; AMP from IMP: step 2/2. The protein operates within purine metabolism; IMP biosynthesis via de novo pathway; 5-amino-1-(5-phospho-D-ribosyl)imidazole-4-carboxamide from 5-amino-1-(5-phospho-D-ribosyl)imidazole-4-carboxylate: step 2/2. The chain is Adenylosuccinate lyase (purB) from Dictyostelium discoideum (Social amoeba).